A 439-amino-acid polypeptide reads, in one-letter code: 23S rRNA (uracil(1939)-C(5))-methyltransferase RlmD (439 aa).

The TRAM domain occupies 10–69 (KTQLNTRHQAVQVERLDHHGAGIAYLKKKPLFIDGALPGEEVVTQLVEEKSKFARGKLIK). Positions 82, 88, 91, and 169 each coordinate [4Fe-4S] cluster. S-adenosyl-L-methionine is bound by residues Q272, F301, N306, E322, N349, and D370. C396 (nucleophile) is an active-site residue.

The protein belongs to the class I-like SAM-binding methyltransferase superfamily. RNA M5U methyltransferase family. RlmD subfamily.

The catalysed reaction is uridine(1939) in 23S rRNA + S-adenosyl-L-methionine = 5-methyluridine(1939) in 23S rRNA + S-adenosyl-L-homocysteine + H(+). Functionally, catalyzes the formation of 5-methyl-uridine at position 1939 (m5U1939) in 23S rRNA. In Vibrio parahaemolyticus serotype O3:K6 (strain RIMD 2210633), this protein is 23S rRNA (uracil(1939)-C(5))-methyltransferase RlmD.